The sequence spans 578 residues: Arginine--tRNA ligase (578 aa).

The 'HIGH' region motif lies at 127–137 (PNLAKEMHVGH).

It belongs to the class-I aminoacyl-tRNA synthetase family. Monomer.

It is found in the cytoplasm. The catalysed reaction is tRNA(Arg) + L-arginine + ATP = L-arginyl-tRNA(Arg) + AMP + diphosphate. The polypeptide is Arginine--tRNA ligase (Pseudomonas fluorescens (strain SBW25)).